We begin with the raw amino-acid sequence, 325 residues long: Peroxidase 47 (325 aa).

Positions 1 to 36 (MLTRFKKQNNKMVRANIVSMVLLMHAIVGFPFHARG) are cleaved as a signal peptide. 4 disulfide bridges follow: cysteine 46-cysteine 125, cysteine 79-cysteine 84, cysteine 131-cysteine 321, and cysteine 209-cysteine 235. The active-site Proton acceptor is the histidine 77. Residues aspartate 78, glycine 83, aspartate 85, and serine 87 each contribute to the Ca(2+) site. Residue proline 172 coordinates substrate. Asparagine 177 carries an N-linked (GlcNAc...) asparagine glycan. Position 202 (histidine 202) interacts with heme b. Position 203 (threonine 203) interacts with Ca(2+). The Ca(2+) site is built by aspartate 246, threonine 248, and aspartate 253.

It belongs to the peroxidase family. Classical plant (class III) peroxidase subfamily. The cofactor is heme b. Ca(2+) serves as cofactor.

The protein resides in the secreted. It catalyses the reaction 2 a phenolic donor + H2O2 = 2 a phenolic radical donor + 2 H2O. Removal of H(2)O(2), oxidation of toxic reductants, biosynthesis and degradation of lignin, suberization, auxin catabolism, response to environmental stresses such as wounding, pathogen attack and oxidative stress. These functions might be dependent on each isozyme/isoform in each plant tissue. The chain is Peroxidase 47 (PER47) from Arabidopsis thaliana (Mouse-ear cress).